Reading from the N-terminus, the 366-residue chain is Polyprenyl transferase AOL_s00215g276 (366 aa).

The segment at 1 to 22 is disordered; sequence MESIIARPRTRSSAKEKTQTMS. 7 helical membrane-spanning segments follow: residues 53–73, 85–105, 137–157, 160–180, 185–205, 212–232, and 253–273; these read LHTL…CLSA, FLSV…AFCT, IIAF…TLGF, ALVC…KRVV, LVLG…VAGN, AVPM…IYAT, and HMHQ…SFTA. A glycan (N-linked (GlcNAc...) asparagine) is linked at N277. 2 consecutive transmembrane segments (helical) span residues 281–301 and 312–332; these read LFWS…LLSL and VFLM…IELW. The N-linked (GlcNAc...) asparagine glycan is linked to N352.

Belongs to the UbiA prenyltransferase family. The cofactor is Mg(2+).

Its subcellular location is the membrane. It functions in the pathway secondary metabolite biosynthesis; terpenoid biosynthesis. In terms of biological role, polyprenyl transferase; part of the gene cluster that mediates the biosynthesis of sesquiterpenyl epoxy-cyclohexenoids (SECs) such as anthrobotrisins and arthrosporols, metabolites that possess a novel hybrid carbon skeleton consisting of a polyketide-derived epoxycyclohexenol combined with a terpenoid-derived monocyclic sesquiterpenol substructure (PKS-PTS hybrid). The SEC pathway plays an important role for fungal soil colonization via decreasing fungal nematode-capturing ability. Within the pathway, the polyprenyl transferase catalyzes the farnesylation of toluquinol to yield farnesyl hydroquinone, the first hybrid precursor for biosynthesis of SECs, and farnesyl quinone (34) might be the key precursor for the epoxy ring formation. The pathway begins with the biosynthesis of 6-methylsalicylic acid (6-MSA), the first precursor of the polyketide-derived epoxycyclohexenol in arthrosporols, by the polyketide synthase (PKS) AOL_s00215g283 via condensation of 1 acetate and 3 malonate units. The 6-methylsalicylic acid decarboxylase AOL_s00215g281 then catalyzes the decarboxylation of 6-methylsalicylic acid to yield m-cresol. The cytochrome P450 monooxygenase AOL_s00215g282 further oxidizes m-cresol to yield toluquinol. With the assistance of the oxidoreductase AOL_s00215g277, the polyprenyl transferase AOL_s00215g276 catalyzes the farnesylation of toluquinol to produce farnesyl hydroquinone, the hybrid precursor for biosynthesis of SECs. Farnesyl hydroquinone undergoes epoxidation and then subsequent dehydrogenation to form farnesyl epoxy-quinone, the first and simplest SEC. The cytochrome P450 monooxygenase AOL_s00215g278 and the FAD-dependent monooxygenase AOL_s00215g279 might be involved in the oxygenation of the phenol moiety, most likely in the epoxy formation. The cytochrome P450 monooxygenases AOL_s00215g274 and AOL_s00215g280 are involved in specific regional ketone reductions at respectively C-4 and C-1 of farnesyl epoxy-quinone PubMed:33823587. The polypeptide is Polyprenyl transferase AOL_s00215g276 (Arthrobotrys oligospora (strain ATCC 24927 / CBS 115.81 / DSM 1491) (Nematode-trapping fungus)).